The sequence spans 1358 residues: DNA-directed RNA polymerase subunit beta (1358 aa).

The protein belongs to the RNA polymerase beta chain family. In terms of assembly, the RNAP catalytic core consists of 2 alpha, 1 beta, 1 beta' and 1 omega subunit. When a sigma factor is associated with the core the holoenzyme is formed, which can initiate transcription.

It catalyses the reaction RNA(n) + a ribonucleoside 5'-triphosphate = RNA(n+1) + diphosphate. In terms of biological role, DNA-dependent RNA polymerase catalyzes the transcription of DNA into RNA using the four ribonucleoside triphosphates as substrates. The polypeptide is DNA-directed RNA polymerase subunit beta (Francisella tularensis subsp. holarctica (strain OSU18)).